Reading from the N-terminus, the 96-residue chain is Antigen H4 (96 aa).

Residues 1 to 20 (EFQEEIKEGVEEHKHEDDPE) form a disordered region. Asn-34 carries an N-linked (GlcNAc...) asparagine glycan.

The sequence is that of Antigen H4 (H4) from Toxoplasma gondii.